The primary structure comprises 600 residues: Adenine deaminase (600 aa).

The protein belongs to the metallo-dependent hydrolases superfamily. Adenine deaminase family. It depends on Mn(2+) as a cofactor.

It catalyses the reaction adenine + H2O + H(+) = hypoxanthine + NH4(+). This Chelativorans sp. (strain BNC1) protein is Adenine deaminase.